A 1169-amino-acid chain; its full sequence is Translation initiation factor IF-2 (1169 aa).

Disordered regions lie at residues 69–108 and 139–568; these read IKAK…PLLI and ALSK…LRAA. Basic and acidic residues-rich tracts occupy residues 71 to 83 and 92 to 102; these read AKNE…DNKN and HPEKLSKEGLN. Over residues 139–156 the composition is skewed to polar residues; it reads ALSKNQNKTNTSVITTPN. A compositionally biased stretch (basic and acidic residues) spans 157–171; the sequence is LKDKKNPSALQDKKP. Residues 196-214 show a composition bias toward low complexity; that stretch reads NLANSNRNINANKINNSVN. Polar residues predominate over residues 231–248; sequence ADNNNFPKKNLNSPNVKS. The segment covering 265–281 has biased composition (low complexity); the sequence is NTNRPNSNSRQPSSNTQ. 3 stretches are compositionally biased toward polar residues: residues 282–294, 412–432, and 439–455; these read ISAN…NRQG, MQLQ…NVNK, and NQKT…SPSP. The span at 472 to 486 shows a compositional bias: basic and acidic residues; the sequence is GRTDWDDSAKLEALR. Residues 544 to 560 show a composition bias toward basic residues; sequence KQFKKKKKETTRQRQKR. The tr-type G domain occupies 661–838; it reads KRPPVITVMG…EVEDLQANPE (178 aa). The G1 stretch occupies residues 670–677; it reads GHVDHGKT. Residue 670 to 677 coordinates GTP; it reads GHVDHGKT. The interval 695–699 is G2; it reads GITQH. The G3 stretch occupies residues 720–723; it reads DTPG. GTP contacts are provided by residues 720-724 and 774-777; these read DTPGH and NKID. The interval 774–777 is G4; sequence NKID. The G5 stretch occupies residues 810–812; the sequence is SAI.

The protein belongs to the TRAFAC class translation factor GTPase superfamily. Classic translation factor GTPase family. IF-2 subfamily.

It is found in the cytoplasm. Functionally, one of the essential components for the initiation of protein synthesis. Protects formylmethionyl-tRNA from spontaneous hydrolysis and promotes its binding to the 30S ribosomal subunits. Also involved in the hydrolysis of GTP during the formation of the 70S ribosomal complex. The sequence is that of Translation initiation factor IF-2 from Prochlorococcus marinus subsp. pastoris (strain CCMP1986 / NIES-2087 / MED4).